The primary structure comprises 451 residues: Trigger factor (451 aa).

Residues 165-250 enclose the PPIase FKBP-type domain; it reads DDKLTIDFEG…LHQIQAREVL (86 aa).

The protein belongs to the FKBP-type PPIase family. Tig subfamily.

The protein resides in the cytoplasm. It carries out the reaction [protein]-peptidylproline (omega=180) = [protein]-peptidylproline (omega=0). In terms of biological role, involved in protein export. Acts as a chaperone by maintaining the newly synthesized protein in an open conformation. Functions as a peptidyl-prolyl cis-trans isomerase. In Helicobacter acinonychis (strain Sheeba), this protein is Trigger factor.